A 122-amino-acid polypeptide reads, in one-letter code: Large ribosomal subunit protein bL17 (122 aa).

The protein belongs to the bacterial ribosomal protein bL17 family. Part of the 50S ribosomal subunit. Contacts protein L32.

In Nautilia profundicola (strain ATCC BAA-1463 / DSM 18972 / AmH), this protein is Large ribosomal subunit protein bL17.